Consider the following 169-residue polypeptide: Putative pre-16S rRNA nuclease (169 aa).

Basic and acidic residues predominate over residues 1–19 (MTDSDHRLPDRPGEGDPGR). The tract at residues 1–24 (MTDSDHRLPDRPGEGDPGRGRRIG) is disordered.

The protein belongs to the YqgF nuclease family.

It is found in the cytoplasm. Functionally, could be a nuclease involved in processing of the 5'-end of pre-16S rRNA. This Mycobacterium sp. (strain KMS) protein is Putative pre-16S rRNA nuclease.